Here is an 811-residue protein sequence, read N- to C-terminus: DEAD-box ATP-dependent RNA helicase 48 (811 aa).

2 disordered regions span residues 1–32 and 93–138; these read MGGG…ERGL and DDGP…EPRL. Over residues 15-29 the composition is skewed to basic residues; the sequence is WQHKRMHEKLARHKE. 2 stretches are compositionally biased toward basic and acidic residues: residues 95-104 and 117-138; these read GPIHRADRPR and GDRR…EPRL. Residues 286-333 are a coiled coil; that stretch reads RNCDMKKERRALKSYEEENNDLAGSFRELREEIKNREVLGAERRRYES. The short motif at 342–370 is the Q motif element; that stretch reads KRFEECGISPLTVKALTDAGYVQTTVVQE. One can recognise a Helicase ATP-binding domain in the interval 373-556; the sequence is LPMCLEGKDV…QLVLKRDHVF (184 aa). An ATP-binding site is contributed by 386–393; sequence AKTGTGKS. The DEAD box motif lies at 504–507; the sequence is DEAD. A Helicase C-terminal domain is found at 570–740; the sequence is KVEQLYLVMP…EMKRKVDGSI (171 aa).

The protein belongs to the DEAD box helicase family.

It catalyses the reaction ATP + H2O = ADP + phosphate + H(+). This chain is DEAD-box ATP-dependent RNA helicase 48, found in Oryza sativa subsp. japonica (Rice).